We begin with the raw amino-acid sequence, 404 residues long: Cysteine desulfurase IscS (404 aa).

Residues 75–76 (AT), N155, Q183, and 203–205 (SAH) each bind pyridoxal 5'-phosphate. Position 206 is an N6-(pyridoxal phosphate)lysine (K206). T243 contacts pyridoxal 5'-phosphate. C328 acts as the Cysteine persulfide intermediate in catalysis. C328 provides a ligand contact to [2Fe-2S] cluster.

It belongs to the class-V pyridoxal-phosphate-dependent aminotransferase family. NifS/IscS subfamily. Homodimer. Forms a heterotetramer with IscU, interacts with other sulfur acceptors. Requires pyridoxal 5'-phosphate as cofactor.

The protein localises to the cytoplasm. The catalysed reaction is (sulfur carrier)-H + L-cysteine = (sulfur carrier)-SH + L-alanine. The protein operates within cofactor biosynthesis; iron-sulfur cluster biosynthesis. Functionally, master enzyme that delivers sulfur to a number of partners involved in Fe-S cluster assembly, tRNA modification or cofactor biosynthesis. Catalyzes the removal of elemental sulfur atoms from cysteine to produce alanine. Functions as a sulfur delivery protein for Fe-S cluster synthesis onto IscU, an Fe-S scaffold assembly protein, as well as other S acceptor proteins. In Shewanella woodyi (strain ATCC 51908 / MS32), this protein is Cysteine desulfurase IscS.